The primary structure comprises 799 residues: MVKFSKQFEGQLVPEWKHAFVDYSLLKKDLKRMQHDYSPQGTIITTSTPHDHHQQQQSVAAPSSYNLSHCRLLLHKLPAAFFGSNNADHAGAIQVRRRVGRGEVYETEVTPEMETTAATAAREFFARLDAQLNKVNHFYKAKEEEFLHRGHSLRKQMDILLDLKSRSSSSLSGHHRAAAGDDPSISSSSATSGAEDESTRYVTSATDTDESQHETAVMRDPEELSAEQGLEDSGSLSRQSLGRTVSSCQRKNLKINIPLTTPCRTISALTDLLRDDLVSQPKNKCDSDAGITFTTINKTKLRHAEKMIKGAFIELYKGLGYLTTYRNLNMMAFVKILKKFEKVSGKQVLSVYLRAVESSYFNSSGEALKLMDEVEDVFVRHFAAGNRRKAMKYLKPTQRKESHTVTFFIGLMTGCFVALFLGYCIMAHIAGMYTQRRDSIYMETVYPVFSMFSLMFLHLFMYGCNMVAWRKARINYSFIFEFAAGRELKYRDVFLVCTASMAVIVGVMFAHLSLAVRGFHAQAIPGFLLLGFLLLLFCPFNMVYRSTRFQFLRILRNIVFSPLYKVVMVDFFMADQLCSQVPMLRSLEYVACYYISGSYRTQEYGYCINTKHIRDLAYAVSFLPYYWRAMQCARRWFDESDTGHLVNLGKYVSAMLAAGAKVAYEKDRSLGSLSLLVIVSSSATMYQLYWDFVKDWGLLQPNSKNPWLRNDLILKSKSIYYLSMGLNLVLRLAWLQTVIHPNFGSLDSRVTSFFLAALEVIRRGHWNFYRLENEHLNNAGKFRAVKTVPLPFHEADEED.

Topologically, residues 1 to 406 (MVKFSKQFEG…TQRKESHTVT (406 aa)) are cytoplasmic. The SPX domain maps to 2–354 (VKFSKQFEGQ…GKQVLSVYLR (353 aa)). The tract at residues 170–243 (SLSGHHRAAA…GSLSRQSLGR (74 aa)) is disordered. The span at 180-193 (GDDPSISSSSATSG) shows a compositional bias: low complexity. Basic and acidic residues predominate over residues 210-222 (ESQHETAVMRDPE). Positions 234-243 (GSLSRQSLGR) are enriched in polar residues. A helical transmembrane segment spans residues 407–427 (FFIGLMTGCFVALFLGYCIMA). Over 428 to 447 (HIAGMYTQRRDSIYMETVYP) the chain is Extracellular. A helical transmembrane segment spans residues 448–468 (VFSMFSLMFLHLFMYGCNMVA). Over 469–492 (WRKARINYSFIFEFAAGRELKYRD) the chain is Cytoplasmic. A helical transmembrane segment spans residues 493–513 (VFLVCTASMAVIVGVMFAHLS). The Extracellular segment spans residues 514–522 (LAVRGFHAQ). A helical membrane pass occupies residues 523 to 543 (AIPGFLLLGFLLLLFCPFNMV). Residues 544–672 (YRSTRFQFLR…AYEKDRSLGS (129 aa)) are Cytoplasmic-facing. One can recognise an EXS domain in the interval 608 to 799 (INTKHIRDLA…LPFHEADEED (192 aa)). A helical membrane pass occupies residues 673–693 (LSLLVIVSSSATMYQLYWDFV). Residues 694–718 (KDWGLLQPNSKNPWLRNDLILKSKS) lie on the Extracellular side of the membrane. Residues 719 to 739 (IYYLSMGLNLVLRLAWLQTVI) traverse the membrane as a helical segment. At 740–799 (HPNFGSLDSRVTSFFLAALEVIRRGHWNFYRLENEHLNNAGKFRAVKTVPLPFHEADEED) the chain is on the cytoplasmic side.

It belongs to the SYG1 (TC 2.A.94) family. In terms of tissue distribution, expressed in roots and flowers.

The protein localises to the cell membrane. In terms of biological role, may transport inorganic phosphate (Pi). The chain is Phosphate transporter PHO1-1 (PHO1-1) from Oryza sativa subsp. japonica (Rice).